Reading from the N-terminus, the 320-residue chain is Cilia- and flagella-associated protein 77 (320 aa).

Residues 1–27 are disordered; the sequence is MPEARSSGPDLTRWRKQQQPVRRTVSQ. The span at 17 to 27 shows a compositional bias: polar residues; sequence QQQPVRRTVSQ.

Belongs to the CFAP77 family. In terms of assembly, microtubule inner protein component of sperm flagellar doublet microtubules. As to expression, expressed in airway epithelial cells.

It localises to the cytoplasm. The protein resides in the cytoskeleton. It is found in the cilium axoneme. The protein localises to the flagellum axoneme. Microtubule inner protein (MIP) part of the dynein-decorated doublet microtubules (DMTs) in cilia axoneme, which is required for motile cilia beating. This chain is Cilia- and flagella-associated protein 77, found in Homo sapiens (Human).